A 301-amino-acid chain; its full sequence is GTPase Era (301 aa).

The Era-type G domain maps to 7 to 175 (YCGFVAIVGR…AAIVRKHLPE (169 aa)). Residues 15 to 22 (GRPNVGKS) form a G1 region. GTP is bound at residue 15–22 (GRPNVGKS). The G2 stretch occupies residues 41–45 (QTTRH). Residues 62-65 (DTPG) form a G3 region. GTP contacts are provided by residues 62–66 (DTPGL) and 124–127 (NKVD). The tract at residues 124-127 (NKVD) is G4. Positions 154 to 156 (ISA) are G5. The region spanning 206-283 (LGAELPYSVT…HLELWVKVKS (78 aa)) is the KH type-2 domain.

Belongs to the TRAFAC class TrmE-Era-EngA-EngB-Septin-like GTPase superfamily. Era GTPase family. In terms of assembly, monomer.

The protein resides in the cytoplasm. The protein localises to the cell inner membrane. An essential GTPase that binds both GDP and GTP, with rapid nucleotide exchange. Plays a role in 16S rRNA processing and 30S ribosomal subunit biogenesis and possibly also in cell cycle regulation and energy metabolism. The chain is GTPase Era from Klebsiella pneumoniae subsp. pneumoniae (strain ATCC 700721 / MGH 78578).